The primary structure comprises 105 residues: Small ribosomal subunit protein uS10 (105 aa).

The protein belongs to the universal ribosomal protein uS10 family. As to quaternary structure, part of the 30S ribosomal subunit.

Involved in the binding of tRNA to the ribosomes. In Desulfovibrio desulfuricans (strain ATCC 27774 / DSM 6949 / MB), this protein is Small ribosomal subunit protein uS10.